Reading from the N-terminus, the 227-residue chain is NAD(P)H-quinone oxidoreductase subunit K, chloroplastic (227 aa).

[4Fe-4S] cluster is bound by residues Cys43, Cys44, Cys108, and Cys139.

This sequence belongs to the complex I 20 kDa subunit family. NDH is composed of at least 16 different subunits, 5 of which are encoded in the nucleus. [4Fe-4S] cluster is required as a cofactor.

The protein localises to the plastid. Its subcellular location is the chloroplast thylakoid membrane. It catalyses the reaction a plastoquinone + NADH + (n+1) H(+)(in) = a plastoquinol + NAD(+) + n H(+)(out). The enzyme catalyses a plastoquinone + NADPH + (n+1) H(+)(in) = a plastoquinol + NADP(+) + n H(+)(out). Its function is as follows. NDH shuttles electrons from NAD(P)H:plastoquinone, via FMN and iron-sulfur (Fe-S) centers, to quinones in the photosynthetic chain and possibly in a chloroplast respiratory chain. It has NADH- and deamino-NADH-specific dehydrogenase activity, using ferricyanide or quinones as acceptors. The immediate electron acceptor for the enzyme in this species is believed to be plastoquinone. Couples the redox reaction to proton translocation, and thus conserves the redox energy in a proton gradient. This Pisum sativum (Garden pea) protein is NAD(P)H-quinone oxidoreductase subunit K, chloroplastic.